A 155-amino-acid chain; its full sequence is IIAMENHPVRWTTPLGLPVVQPYRKLGRHLIKTSLQILTLQRETDKVMVKRQRTAFPPNFVHSLDGSHMMMTAIACKESGLSFAGVHDSYWTHASDVDQMNKILREKFVELYDAPILENLLESFQQSFPDLQFPPLPERGDFDLREVLESPYFFN.

Residue D88 is part of the active site.

Belongs to the phage and mitochondrial RNA polymerase family.

The enzyme catalyses RNA(n) + a ribonucleoside 5'-triphosphate = RNA(n+1) + diphosphate. In terms of biological role, DNA-dependent RNA polymerase catalyzes the transcription of DNA into RNA using the four ribonucleoside triphosphates as substrates. The chain is DNA-directed RNA polymerase 1A (RPOT1-SYL) from Nicotiana tabacum (Common tobacco).